The primary structure comprises 540 residues: CTP synthase (540 aa).

Positions 1-273 are amidoligase domain; sequence MNNKDLKTKF…DDFILQHFKL (273 aa). Ser19 provides a ligand contact to CTP. Ser19 is a binding site for UTP. Position 20–25 (20–25) interacts with ATP; the sequence is SLGKGI. Residue Tyr60 coordinates L-glutamine. Residue Asp77 coordinates ATP. Residues Asp77 and Glu147 each coordinate Mg(2+). CTP-binding positions include 154–156, 194–199, and Lys230; these read DIE and KTKPTQ. Residues 194–199 and Lys230 contribute to the UTP site; that span reads KTKPTQ. Residues 306 to 539 form the Glutamine amidotransferase type-1 domain; it reads YIVLHDAYLS…VEASLLNQKN (234 aa). An L-glutamine-binding site is contributed by Gly361. The active-site Nucleophile; for glutamine hydrolysis is Cys388. L-glutamine is bound by residues 389–392, Glu412, and Arg466; that span reads LGMQ. Residues His512 and Glu514 contribute to the active site.

Belongs to the CTP synthase family. In terms of assembly, homotetramer.

The catalysed reaction is UTP + L-glutamine + ATP + H2O = CTP + L-glutamate + ADP + phosphate + 2 H(+). The enzyme catalyses L-glutamine + H2O = L-glutamate + NH4(+). It carries out the reaction UTP + NH4(+) + ATP = CTP + ADP + phosphate + 2 H(+). It functions in the pathway pyrimidine metabolism; CTP biosynthesis via de novo pathway; CTP from UDP: step 2/2. Allosterically activated by GTP, when glutamine is the substrate; GTP has no effect on the reaction when ammonia is the substrate. The allosteric effector GTP functions by stabilizing the protein conformation that binds the tetrahedral intermediate(s) formed during glutamine hydrolysis. Inhibited by the product CTP, via allosteric rather than competitive inhibition. Its function is as follows. Catalyzes the ATP-dependent amination of UTP to CTP with either L-glutamine or ammonia as the source of nitrogen. Regulates intracellular CTP levels through interactions with the four ribonucleotide triphosphates. In Onion yellows phytoplasma (strain OY-M), this protein is CTP synthase.